The following is a 151-amino-acid chain: 4-hydroxybenzoyl-CoA thioesterase (151 aa).

The active site involves Glu-73. 100–102 provides a ligand contact to substrate; the sequence is FFR.

It belongs to the thioesterase PaaI family. Homotetramer.

The catalysed reaction is 4-hydroxybenzoyl-CoA + H2O = 4-hydroxybenzoate + CoA + H(+). Its pathway is xenobiotic degradation; 4-chlorobenzoate degradation; 4-hydroxybenzoate from 4-chlorobenzoate: step 3/3. The sequence is that of 4-hydroxybenzoyl-CoA thioesterase from Arthrobacter globiformis.